The chain runs to 67 residues: Penaeidin-4d (67 aa).

The first 19 residues, 1–19 (MRLLVCLVFLASFAMVCQG), serve as a signal peptide directing secretion. 3 disulfides stabilise this stretch: Cys-42–Cys-56, Cys-45–Cys-63, and Cys-57–Cys-64. Leu-66 is modified (leucine amide).

This sequence belongs to the penaeidin family.

The protein localises to the cytoplasmic granule. Its function is as follows. Antibacterial and antifungal activity. Presents chitin-binding activity. The sequence is that of Penaeidin-4d from Penaeus setiferus (Atlantic white shrimp).